An 863-amino-acid polypeptide reads, in one-letter code: MSESHVKISRTIIRGTSPSTVRLESRVRELEDLLDLERDARVRAERNANEMSIQLDTMAERLDELSGTSSQTHDAIRRKDMEISKLRKDLENANAAFETAEATLRRKHNTMISEISSEVENLQKQKGRAEKDKSQLMLEIDNVLGQLDGALKAKASAESKLEGLDSQLTRLKALTDDLQRQMADANSAKSRLAAENFELVRANQEYEAQVVTFSKTKAALESQLDDLKRAMDEDARNRLNLQTQLSSLQMDYDNLQARYEEEAEAAGNLRNQVAKFNADMAALKTRLERELMAKTEEFEELKRKLTVRITELEDMAEHERTRANNLEKTKVKLTLEIKDLQAENEALAAENGELTHRVKQAENLANELQRRIDEMTVEINTLNSANSALEADNMRLKGQVGDLTDRIANLDRENRQLGDQLKETKSALRDANRRLTDLEALRSQLEAERDNLASALHDAEEALKEMEAKYVASQNALNHLKSEMEQRLREKDEELENLRKSTTRTIEELTTTISEMEVRFKSDMSRLKKKYEATISELEVQLDVANKANANLNRENKTLAQRVQELQAALEDERRAREAAESNLQVSERKRIALASEVEEIRSQLELSDRARKNAESELNDANGRISELTLSVNTLTNDKRRLEGDIGVMQGDLDEAVNARKAAEDRADRLNAEVLRLADELRQEQENYXRAETLRKQLEIEIREITVKLEEAEAFATREGRRMVQKLQNRVRELEAELDGEIRRAKEAFANARKYERQFKELQTQSEDDKRMILELQDLLDKTQIKMKAYKRQLEEQEEVSQLTMSKYRKAQQQIEEAEHRADMAERTITIKRTIGGPGSRAVSVVREINSVSRGNRATSIM.

Positions 1 to 18 (MSESHVKISRTIIRGTSP) are nonhelical region. Residues 19–836 (STVRLESRVR…ERTITIKRTI (818 aa)) are a coiled coil. Positions 837 to 863 (GGPGSRAVSVVREINSVSRGNRATSIM) are nonhelical region.

This sequence belongs to the paramyosin family. Homodimer.

It is found in the cytoplasm. Its subcellular location is the myofibril. Its function is as follows. Paramyosin is a major structural component of many thick filaments isolated from invertebrate muscles. In Taenia saginata (Beef tapeworm), this protein is Paramyosin (PMY).